A 298-amino-acid chain; its full sequence is ADP-ribosyl cyclase/cyclic ADP-ribose hydrolase 1 (298 aa).

Residues M1 to Q21 lie on the Cytoplasmic side of the membrane. Residues V22 to V42 form a helical; Signal-anchor for type II membrane protein membrane-spanning segment. At L43–M298 the chain is on the extracellular side. 3 disulfide bridges follow: C64/C80, C97/C178, and C158/C171. Residue N98 is glycosylated (N-linked (GlcNAc...) asparagine). The active site involves C117. Residue N118 is glycosylated (N-linked (GlcNAc...) asparagine). N-linked (GlcNAc...) asparagine glycosylation occurs at N177. C199 is a catalytic residue. 2 N-linked (GlcNAc...) asparagine glycosylation sites follow: N207 and N268. Disulfide bonds link C252-C273 and C285-C294.

It belongs to the ADP-ribosyl cyclase family. As to quaternary structure, homodimer. Osteoclasts.

It localises to the cell membrane. It is found in the microsome membrane. The protein localises to the endoplasmic reticulum membrane. It catalyses the reaction NAD(+) = cyclic ADP-beta-D-ribose + nicotinamide + H(+). The catalysed reaction is 2'-phospho-cyclic ADP-ribose + nicotinate = nicotinate-adenine dinucleotide phosphate. The enzyme catalyses NAD(+) + H2O = ADP-D-ribose + nicotinamide + H(+). It carries out the reaction nicotinate + NADP(+) = nicotinate-adenine dinucleotide phosphate + nicotinamide. Synthesizes cyclic ADP-ribose (cADPR), a second messenger for glucose-induced insulin secretion. Synthesizes the Ca(2+) mobilizer nicotinate-adenine dinucleotide phosphate, NAADP(+), from 2'-phospho-cADPR and nicotinic acid, as well as from NADP(+) and nicotinic acid. Also has cADPR hydrolase activity. The sequence is that of ADP-ribosyl cyclase/cyclic ADP-ribose hydrolase 1 (CD38) from Oryctolagus cuniculus (Rabbit).